Consider the following 195-residue polypeptide: Nucleoside triphosphate pyrophosphatase (195 aa).

Aspartate 76 functions as the Proton acceptor in the catalytic mechanism.

Belongs to the Maf family. Requires a divalent metal cation as cofactor.

It is found in the cytoplasm. It catalyses the reaction a ribonucleoside 5'-triphosphate + H2O = a ribonucleoside 5'-phosphate + diphosphate + H(+). The catalysed reaction is a 2'-deoxyribonucleoside 5'-triphosphate + H2O = a 2'-deoxyribonucleoside 5'-phosphate + diphosphate + H(+). In terms of biological role, nucleoside triphosphate pyrophosphatase. May have a dual role in cell division arrest and in preventing the incorporation of modified nucleotides into cellular nucleic acids. The protein is Nucleoside triphosphate pyrophosphatase of Pelagibacter ubique (strain HTCC1062).